The chain runs to 20 residues: Large ribosomal subunit protein bL31 (20 aa).

Zn(2+)-binding residues include X16 and X18.

Belongs to the bacterial ribosomal protein bL31 family. Type A subfamily. In terms of assembly, part of the 50S ribosomal subunit. It depends on Zn(2+) as a cofactor.

In terms of biological role, binds the 23S rRNA. This Ectopseudomonas mendocina (Pseudomonas mendocina) protein is Large ribosomal subunit protein bL31 (rpmE).